The following is a 429-amino-acid chain: Ubiquinone hydroxylase UbiL (429 aa).

The segment at 1-22 is disordered; it reads MSEPLLRGLAAGDPPSATGPVT.

Belongs to the UbiH/COQ6 family. FAD is required as a cofactor.

The enzyme catalyses a 2-(all-trans-polyprenyl)phenol + NADPH + O2 + H(+) = a 3-(all-trans-polyprenyl)benzene-1,2-diol + NADP(+) + H2O. It participates in cofactor biosynthesis; ubiquinone biosynthesis. Functionally, catalyzes the hydroxylation of two positions of the aromatic ring during ubiquinone biosynthesis. The polypeptide is Ubiquinone hydroxylase UbiL (Rhodospirillum rubrum (strain ATCC 11170 / ATH 1.1.1 / DSM 467 / LMG 4362 / NCIMB 8255 / S1)).